Reading from the N-terminus, the 300-residue chain is 4-hydroxy-tetrahydrodipicolinate synthase (300 aa).

Residue threonine 56 coordinates pyruvate. Catalysis depends on tyrosine 145, which acts as the Proton donor/acceptor. Lysine 173 functions as the Schiff-base intermediate with substrate in the catalytic mechanism. Valine 215 is a pyruvate binding site.

The protein belongs to the DapA family. Homotetramer; dimer of dimers.

Its subcellular location is the cytoplasm. It carries out the reaction L-aspartate 4-semialdehyde + pyruvate = (2S,4S)-4-hydroxy-2,3,4,5-tetrahydrodipicolinate + H2O + H(+). It participates in amino-acid biosynthesis; L-lysine biosynthesis via DAP pathway; (S)-tetrahydrodipicolinate from L-aspartate: step 3/4. Its function is as follows. Catalyzes the condensation of (S)-aspartate-beta-semialdehyde [(S)-ASA] and pyruvate to 4-hydroxy-tetrahydrodipicolinate (HTPA). This chain is 4-hydroxy-tetrahydrodipicolinate synthase, found in Prochlorococcus marinus (strain AS9601).